A 442-amino-acid chain; its full sequence is G-protein coupled receptor family C group 5 member C (442 aa).

The first 23 residues, 1 to 23 (MAIHRTVLMCLGLPLFLLPGARA), serve as a signal peptide directing secretion. Residues 24 to 50 (QEQAPPGCSPDLNPLYYNLCDRSEAWG) are Extracellular-facing. Residues 51 to 71 (IILEAVAGAGVVTTFVLTIIL) traverse the membrane as a helical segment. Over 72 to 85 (VASLPFVQDTKKRS) the chain is Cytoplasmic. A helical membrane pass occupies residues 86 to 106 (LLGTQVFFLLGTLGLFCLVFA). Residues 107–120 (CVVKPSFSTCASRR) are Extracellular-facing. Residues 121–141 (FLFGVLFAICFSCLVAHVLAL) traverse the membrane as a helical segment. Topologically, residues 142–155 (HFLVRKNHGPRGWV) are cytoplasmic. A helical membrane pass occupies residues 156-176 (IFLVALLLSLVEVIINTEWLI). Residues 177–209 (ITLVRGAGTEGDALGNGSAGWVAVSPCAIANAD) lie on the Extracellular side of the membrane. N-linked (GlcNAc...) asparagine glycosylation occurs at Asn-192. Residues 210 to 230 (FVMALIYVMLLLLCAFSGAWS) traverse the membrane as a helical segment. Topologically, residues 231-242 (ALCGRFKRWRKH) are cytoplasmic. A helical transmembrane segment spans residues 243–263 (GVFILLTTTASIAVWVVWIVM). Residues 264–280 (YTYGNRQHNSPTWDDPT) lie on the Extracellular side of the membrane. A helical transmembrane segment spans residues 281–301 (LAIALATNAWAFVLFYVIPEV). Residues 302–442 (SQVTRSSPEQ…QVFRNPYVWD (141 aa)) are Cytoplasmic-facing. Ser-345, Ser-384, Ser-404, and Ser-407 each carry phosphoserine. Position 415 is a phosphotyrosine (Tyr-415). Phosphothreonine is present on Thr-424.

Belongs to the G-protein coupled receptor 3 family.

It localises to the cell membrane. This retinoic acid-inducible G-protein coupled receptor provide evidence for a possible interaction between retinoid and G-protein signaling pathways. This chain is G-protein coupled receptor family C group 5 member C (GPRC5C), found in Bos taurus (Bovine).